Consider the following 438-residue polypeptide: sn-glycerol-3-phosphate-binding periplasmic protein UgpB (438 aa).

Positions Met1–Ala23 are cleaved as a signal peptide. Residues Tyr65, Glu89, Ser144, Ser270, Gly307, Tyr346, and Arg397 each contribute to the sn-glycerol 3-phosphate site.

The protein belongs to the bacterial solute-binding protein 1 family. As to quaternary structure, the complex is composed of two ATP-binding proteins (UgpC), two transmembrane proteins (UgpA and UgpE) and a solute-binding protein (UgpB).

It is found in the periplasm. Its function is as follows. Part of the ABC transporter complex UgpBAEC involved in sn-glycerol-3-phosphate (G3P) import. Binds G3P. The sequence is that of sn-glycerol-3-phosphate-binding periplasmic protein UgpB (ugpB) from Escherichia coli O1:K1 / APEC.